We begin with the raw amino-acid sequence, 584 residues long: WD repeat-containing protein JIP5 (584 aa).

WD repeat units lie at residues 128-173 (RHKG…GKVD), 180-219 (SAKDKLTKLCHSTTHPFLLSGTEDGHVLVYDSSNLGGTNK), 269-314 (DQED…LADQ), and 378-415 (DAVDEVGVLDIDYDYRLISAGMDSLKIWSNRYSDDQEE). Disordered stretches follow at residues 409 to 497 (YSDD…SEYI) and 516 to 563 (KKLI…EKKV). Composition is skewed to acidic residues over residues 412–429 (DQEEEEEEEEEEEEEEDS) and 450–460 (FDSENNDDGEE). 2 stretches are compositionally biased toward basic and acidic residues: residues 483–493 (TRNEENKDNTK) and 528–552 (SKKEDDGDDNNKSLQEQEKAEEVPQ).

Belongs to the WD repeat WDR55 family.

Its subcellular location is the nucleus. The protein localises to the nucleolus. The sequence is that of WD repeat-containing protein JIP5 (JIP5) from Lodderomyces elongisporus (strain ATCC 11503 / CBS 2605 / JCM 1781 / NBRC 1676 / NRRL YB-4239) (Yeast).